The following is a 259-amino-acid chain: tRNA pseudouridine synthase A (259 aa).

D52 acts as the Nucleophile in catalysis. Y110 contacts substrate.

The protein belongs to the tRNA pseudouridine synthase TruA family. As to quaternary structure, homodimer.

The catalysed reaction is uridine(38/39/40) in tRNA = pseudouridine(38/39/40) in tRNA. Its function is as follows. Formation of pseudouridine at positions 38, 39 and 40 in the anticodon stem and loop of transfer RNAs. The chain is tRNA pseudouridine synthase A from Coprothermobacter proteolyticus (strain ATCC 35245 / DSM 5265 / OCM 4 / BT).